A 368-amino-acid polypeptide reads, in one-letter code: Peptide chain release factor 2 (368 aa).

An N5-methylglutamine modification is found at Q250.

It belongs to the prokaryotic/mitochondrial release factor family. Methylated by PrmC. Methylation increases the termination efficiency of RF2.

It localises to the cytoplasm. In terms of biological role, peptide chain release factor 2 directs the termination of translation in response to the peptide chain termination codons UGA and UAA. The sequence is that of Peptide chain release factor 2 from Mycolicibacterium vanbaalenii (strain DSM 7251 / JCM 13017 / BCRC 16820 / KCTC 9966 / NRRL B-24157 / PYR-1) (Mycobacterium vanbaalenii).